A 492-amino-acid chain; its full sequence is 3-octaprenyl-4-hydroxybenzoate carboxy-lyase (492 aa).

Mn(2+) is bound at residue Asn177. Prenylated FMN-binding positions include 180 to 182 (IYR), 194 to 196 (RWL), and 199 to 200 (RG). A Mn(2+)-binding site is contributed by Glu243. The active-site Proton donor is the Asp292.

Belongs to the UbiD family. In terms of assembly, homohexamer. It depends on prenylated FMN as a cofactor. Mn(2+) is required as a cofactor.

The protein localises to the cell membrane. It catalyses the reaction a 4-hydroxy-3-(all-trans-polyprenyl)benzoate + H(+) = a 2-(all-trans-polyprenyl)phenol + CO2. The protein operates within cofactor biosynthesis; ubiquinone biosynthesis. In terms of biological role, catalyzes the decarboxylation of 3-octaprenyl-4-hydroxy benzoate to 2-octaprenylphenol, an intermediate step in ubiquinone biosynthesis. This is 3-octaprenyl-4-hydroxybenzoate carboxy-lyase from Neisseria meningitidis serogroup A / serotype 4A (strain DSM 15465 / Z2491).